A 202-amino-acid chain; its full sequence is Inner membrane-spanning protein YciB (202 aa).

5 helical membrane passes run 47–67 (ILLA…WVHF), 75–95 (MLWV…AFQN), 101–121 (WKPT…AFIL), 146–166 (LSWI…AFNF), and 174–194 (FKLF…GMLL).

Belongs to the YciB family.

The protein resides in the cell inner membrane. Its function is as follows. Plays a role in cell envelope biogenesis, maintenance of cell envelope integrity and membrane homeostasis. This Dechloromonas aromatica (strain RCB) protein is Inner membrane-spanning protein YciB.